The primary structure comprises 2049 residues: MGRLGEAKAVDLEAETSTVGLYDVCTVGRILPLLNEMSIDKKSPAWKLKPKSNERFLVLASCSDLAVFSLGEKSDYSFNTGLGGAITDFEILGSSSFFVGVIEHRRIVILSLDKQEIYLNEPAPHEIDFVVCHTTSSVCQLIFGSRSDNWHTITLPGDVAASKETNRFENWHRDQIQEFFHQAMGKTVSKSVDMSKVAGDITLISNGPLQTFASIDQQRGIHWCGLVESEFEVIGMEKQFLQVRDGGRFSLHLDTDGWIHVFDSLVSSFCHEFDMKMSPDDKILDFVIIDKNEVEVPKMFAILVLPRDGDSTKMMIYDRLNKDNCFALDSSTSTTLFAYGGSDRVLIAVEELENSLADEQDGSQIVVRQVSQSRPEMRFESLLKNNRFEEAEKFAMAFMLDVQKVYKGHVHYLMDSCDESDESFETLMTKMGQIQDHNMVAETYFTLVGMSRRCDRIRTYLTHAKKRRITDLDILKMIEALCYTWGTYRIIAGPEENEPSRPQVNETIWDLFVEALHDANPWIEIYNEFISDAQFTQARVIFSRHGKSITDYMCDDEENTISRLETLFRMFIDAISSDISKWSNVIEHVTTDILPACVMITEELIPCLESLITSLISLLEYRDSTNWPENAIKAASSYDTMTKILSNNGNTPATQCILVMYGSKLGSSAGNKPSSMSRIKKIYYDLIELKRLKDVYECSISFSVFQNMSSEQICHKILQNALANPNMTHAKIEKFVKPFMAERHLDQEQTIVNYIQMMSGAAVTNANLFGWEKQCVQLCASLMDETRRCCSIISIASTAKIPWPAELNEAVEKILASRTLLRSEIEQMHLVCKRTELYKMLSSYGFSRQDIELLTTPDSNMDIILTIRCMLAHREKASRFVDVIKLVDLLKAMQGSSQPRTLRIEYVQSFAIIHMMSHQDVTISIINYIDSLGDRERVKTISLVFSFIECVANAPATGDNVLEREKILGVGEELMSHYTCRDNNFNDPERRLKDELVLLREVQKTETKAVLLSELKDEDWQRRFLERLIESNSSMSLNLGRCSYMGISPEHLIEMILTKATVENDMDTIVDSITNYVEFINSLTDSSREMLEPIVQILSWITFRLPKLLPNETEMARADYIAFVVKRIGRVVRETLRRFSFDVISDDLDYLLQLEAFYHLGEHIIKQSLRGQENENEKQEMFRSDDDTFLPTDSSNPFSNQSSLRIFEFKRPLGTFDFSNDPALFEGVQGVLALAMVAPSVARPYDSEISPDDANEFRSSWEQLNMFLAMHSQDLLDISARVFAGSLKCWAGEYLQGIVEMEQPILSVVERMLQQKKFDFWHAVTLLGGIPLERLDRAIIDLQKRQGVRSSTKATIQYLQLAFVMSLLARNMEKVPTIVSAYEQKYLVKKLAEEGIRVSITQDFVDKVLQQAIDLRQPLSPLRLHDYVKKYVEKLIRNSKISVGEYMVRYATLLIRKASVAGRHTDREIRKEEIEKYIEAARIALRIAEEEDASCICNYLHCLLYVVCPYNYEVIQFIVTSYGKYATETVEIEFNKNLKSIMAFLWAYQRTNHISNEESIWFTKRESVLMKDEKEFEKTGRMLDPFGHSLRVVYEDDGSNMSDSYNSDLALSSDAMVYERNSVIISDLPSLAEQYLPFHAFLLRKKEEIDEIVMGIVKAELSIFNVPIWQTFLREVSWLSSRFSRSQLLSSAIFAHANKYAKFGKSLPDGERNVIYELLNSASQRHVVVSTIALLFKRIILSDVKIELLQMGVNISERWTSDLTGEEQQEMEEQSARLKDGIAKFSTELELKKNGLYNEKTADNIENVSELCSLIYNEMVQWDDSRDVLKKCQVVDKIAKANGLDLTALHEQLVFSWVEDTQTIISINHVDMNESIGGTSFLDHKDETDDQNDLRIPLFDGILDKVVVLCQRIDKKRLLTRLGSILMRGGRKATGGYTAVVRATCIILRSFTDTEVSELLSGADMFALCSTLENQLYERLFEKAEVKGDCKTDKMQLIKSLLQCPSRTHPMTALIACLIIDHEFKDPKRDISLGWDVGCVPVSANSSNS.

As to quaternary structure, component of the RZZ complex composed of rod-1, czw-1 and zwl-1. Interacts (via N-terminus) with NDC80 complex component ndc-80.

Its subcellular location is the chromosome. It is found in the centromere. The protein resides in the kinetochore. The protein localises to the cytoplasm. It localises to the cytoskeleton. Its subcellular location is the spindle. In terms of biological role, essential component of the mitotic checkpoint, which prevents cells from prematurely exiting mitosis. Required for chromosome segregation, the assembly of the dynein-dynactin and mdf-1-mdf-2 complexes onto kinetochores and spindle pole separation. Plays a role in nuclear envelope breakdown. Its function related to the spindle assembly machinery and kinetochore-microtubule attachments likely depends on its association in the mitotic RZZ complex. The RZZ complex recruits the spindly-like protein spdl-1 to kinetochores. To prevent irregular chromosome segregation, the complex also inhibits the attachment of the kinetochore-associated NDC80 complex to microtubules. The recruitment of spdl-1 to kinetochores relieves this inhibition. Required for embryonic development. The polypeptide is Kinetochore-associated protein rod-1 (Caenorhabditis elegans).